Here is a 297-residue protein sequence, read N- to C-terminus: Ribosomal RNA small subunit methyltransferase A (297 aa).

S-adenosyl-L-methionine-binding residues include asparagine 28, leucine 30, glycine 55, glutamate 76, aspartate 101, and asparagine 126.

The protein belongs to the class I-like SAM-binding methyltransferase superfamily. rRNA adenine N(6)-methyltransferase family. RsmA subfamily.

The protein resides in the cytoplasm. The catalysed reaction is adenosine(1518)/adenosine(1519) in 16S rRNA + 4 S-adenosyl-L-methionine = N(6)-dimethyladenosine(1518)/N(6)-dimethyladenosine(1519) in 16S rRNA + 4 S-adenosyl-L-homocysteine + 4 H(+). In terms of biological role, specifically dimethylates two adjacent adenosines (A1518 and A1519) in the loop of a conserved hairpin near the 3'-end of 16S rRNA in the 30S particle. May play a critical role in biogenesis of 30S subunits. The protein is Ribosomal RNA small subunit methyltransferase A of Latilactobacillus sakei subsp. sakei (strain 23K) (Lactobacillus sakei subsp. sakei).